Here is a 472-residue protein sequence, read N- to C-terminus: Cysteine--tRNA ligase (472 aa).

Zn(2+) is bound at residue cysteine 28. The short motif at proline 30–histidine 40 is the 'HIGH' region element. Zn(2+)-binding residues include cysteine 207, histidine 232, and glutamate 236. The 'KMSKS' region signature appears at lysine 264 to serine 268. Lysine 267 is an ATP binding site.

This sequence belongs to the class-I aminoacyl-tRNA synthetase family. Requires Zn(2+) as cofactor.

The protein resides in the cytoplasm. The enzyme catalyses tRNA(Cys) + L-cysteine + ATP = L-cysteinyl-tRNA(Cys) + AMP + diphosphate. This chain is Cysteine--tRNA ligase (cysS), found in Aeropyrum pernix (strain ATCC 700893 / DSM 11879 / JCM 9820 / NBRC 100138 / K1).